A 522-amino-acid chain; its full sequence is Secreted RxLR effector protein 105 (522 aa).

An N-terminal signal peptide occupies residues 1 to 21 (MRGPCSVITALLVVASSQIAA). The short motif at 48-63 (RYLRGSQHVLDSNEER) is the RxLR-dEER element.

It belongs to the RxLR effector family.

The protein localises to the secreted. It is found in the host nucleus. The protein resides in the host cytoplasm. Its function is as follows. Secreted effector that dos not suppress the host cell death induced by cell death-inducing proteins. This is Secreted RxLR effector protein 105 from Plasmopara viticola (Downy mildew of grapevine).